The primary structure comprises 415 residues: Nacrein-like protein C2 (415 aa).

Asparagine 27 carries an N-linked (GlcNAc...) asparagine glycan. Residues 33–414 (AGFSYDRSIC…KNKVTVYKSF (382 aa)) form the Alpha-carbonic anhydrase domain. Zn(2+) contacts are provided by histidine 132, histidine 134, and histidine 157. The segment at 201–297 (DEPDDEECKH…GENGHKHGCR (97 aa)) is disordered. A compositionally biased stretch (basic and acidic residues) spans 207 to 219 (ECKHILKGHHPDN). Residues 220–289 (NENGNGDNGN…NNGENGNNGE (70 aa)) show a composition bias toward low complexity. Tandem repeats lie at residues 225 to 227 (GDN), 228 to 230 (GNN), 231 to 233 (GYN), 234 to 236 (GDN), 237 to 239 (GNN), 240 to 242 (GDN), 243 to 245 (GNN), 246 to 248 (GYN), 249 to 251 (GDN), 252 to 254 (GNN), 255 to 257 (GVN), 258 to 260 (GNN), 261 to 263 (GYN), 264 to 266 (GDN), 267 to 269 (GNN), 270 to 272 (GDN), 273 to 275 (GNN), 276 to 278 (GEN), 279 to 281 (GNN), 282 to 284 (GEN), 285 to 286 (GN), and 288 to 290 (GEN). The interval 225–290 (GDNGNNGYNG…NGENGNNGEN (66 aa)) is 27 X 3 AA approximate tandem repeats of G-X-N. A substrate-binding site is contributed by 355-356 (TT).

The protein belongs to the alpha-carbonic anhydrase family. As to quaternary structure, homooligomer; disulfide-linked. May also be disulfide-linked to insoluble organic matrix. Requires Zn(2+) as cofactor. In terms of tissue distribution, expressed in the mantle.

Its subcellular location is the secreted. It localises to the extracellular space. It is found in the extracellular matrix. The enzyme catalyses hydrogencarbonate + H(+) = CO2 + H2O. In terms of biological role, acts as a negative regulator for calcification in the shells of mollusks. May function both as a calcium concentrator and as a carbonic anhydrase required for production of carbonate ions, which are assembled to CaCO(3) at mineralization sites. Is important for shell formation in both the calcitic prismatic layer and the aragonitic nacreous layer. Shows inhibitory activity of crystal formation when present in free state but, when attached to the insoluble matrix, may regulate the form and size of aragonite crystal. This is Nacrein-like protein C2 from Crassostrea nippona (Iwagaki oyster).